Here is a 657-residue protein sequence, read N- to C-terminus: tRNA 5-methylaminomethyl-2-thiouridine biosynthesis bifunctional protein MnmC (657 aa).

Residues 1 to 233 (MPRALEPAEP…KWQMTVASFR (233 aa)) are tRNA (mnm(5)s(2)U34)-methyltransferase. The tract at residues 257 to 657 (IGAGLAGCAV…LRALRHGHTG (401 aa)) is FAD-dependent cmnm(5)s(2)U34 oxidoreductase.

This sequence in the N-terminal section; belongs to the methyltransferase superfamily. tRNA (mnm(5)s(2)U34)-methyltransferase family. It in the C-terminal section; belongs to the DAO family. FAD is required as a cofactor.

It localises to the cytoplasm. It catalyses the reaction 5-aminomethyl-2-thiouridine(34) in tRNA + S-adenosyl-L-methionine = 5-methylaminomethyl-2-thiouridine(34) in tRNA + S-adenosyl-L-homocysteine + H(+). Catalyzes the last two steps in the biosynthesis of 5-methylaminomethyl-2-thiouridine (mnm(5)s(2)U) at the wobble position (U34) in tRNA. Catalyzes the FAD-dependent demodification of cmnm(5)s(2)U34 to nm(5)s(2)U34, followed by the transfer of a methyl group from S-adenosyl-L-methionine to nm(5)s(2)U34, to form mnm(5)s(2)U34. The sequence is that of tRNA 5-methylaminomethyl-2-thiouridine biosynthesis bifunctional protein MnmC from Cupriavidus necator (strain ATCC 17699 / DSM 428 / KCTC 22496 / NCIMB 10442 / H16 / Stanier 337) (Ralstonia eutropha).